The primary structure comprises 397 residues: 1-deoxy-D-xylulose 5-phosphate reductoisomerase (397 aa).

6 residues coordinate NADPH: Thr-10, Gly-11, Ser-12, Ile-13, Asn-39, and Asn-125. Residue Lys-126 coordinates 1-deoxy-D-xylulose 5-phosphate. Glu-127 is an NADPH binding site. Mn(2+) is bound at residue Asp-151. 1-deoxy-D-xylulose 5-phosphate contacts are provided by Ser-152, Glu-153, Ser-187, and His-210. Glu-153 serves as a coordination point for Mn(2+). An NADPH-binding site is contributed by Gly-216. Ser-223, Asn-228, Lys-229, and Glu-232 together coordinate 1-deoxy-D-xylulose 5-phosphate. Residue Glu-232 participates in Mn(2+) binding.

It belongs to the DXR family. In terms of assembly, homodimer. Mg(2+) serves as cofactor. Requires Mn(2+) as cofactor.

The enzyme catalyses 2-C-methyl-D-erythritol 4-phosphate + NADP(+) = 1-deoxy-D-xylulose 5-phosphate + NADPH + H(+). It functions in the pathway isoprenoid biosynthesis; isopentenyl diphosphate biosynthesis via DXP pathway; isopentenyl diphosphate from 1-deoxy-D-xylulose 5-phosphate: step 1/6. In terms of biological role, catalyzes the NADPH-dependent rearrangement and reduction of 1-deoxy-D-xylulose-5-phosphate (DXP) to 2-C-methyl-D-erythritol 4-phosphate (MEP). In Wigglesworthia glossinidia brevipalpis, this protein is 1-deoxy-D-xylulose 5-phosphate reductoisomerase.